We begin with the raw amino-acid sequence, 140 residues long: MTKQRTLSIIKPDAVEKNVIGEIYSRFEKAGLRIIAAKMKHLSKAEAERFYAVHKDRPFFSALVEFMISGPVMIQVLEGENAIAKNRELMGATNPKEAKAGTIRADFADSIDANAVHGSDAEDTAAQEIRYFFSDTEIFG.

ATP is bound by residues K11, F59, R87, T93, R104, and N114. H117 (pros-phosphohistidine intermediate) is an active-site residue.

The protein belongs to the NDK family. In terms of assembly, homotetramer. Requires Mg(2+) as cofactor.

The protein resides in the cytoplasm. It carries out the reaction a 2'-deoxyribonucleoside 5'-diphosphate + ATP = a 2'-deoxyribonucleoside 5'-triphosphate + ADP. The enzyme catalyses a ribonucleoside 5'-diphosphate + ATP = a ribonucleoside 5'-triphosphate + ADP. Its function is as follows. Major role in the synthesis of nucleoside triphosphates other than ATP. The ATP gamma phosphate is transferred to the NDP beta phosphate via a ping-pong mechanism, using a phosphorylated active-site intermediate. This chain is Nucleoside diphosphate kinase, found in Francisella tularensis subsp. tularensis (strain SCHU S4 / Schu 4).